Here is a 387-residue protein sequence, read N- to C-terminus: Sorting nexin-7 (387 aa).

The region spanning 30–151 (KDLFITVDEP…IFLTAQAWEL (122 aa)) is the PX domain. Residues Arg-73, Gln-75, Lys-103, and Arg-117 each coordinate a 1,2-diacyl-sn-glycero-3-phospho-(1D-myo-inositol-3-phosphate). Positions 178-387 (GVKNRPEEFM…HLEETSEDKP (210 aa)) constitute a BAR domain.

Belongs to the sorting nexin family. Heterodimer; heterodimerizes with SNX4.

It localises to the early endosome membrane. Functionally, involved in the regulation of endocytosis and in several stages of intracellular trafficking. Together with SNX4, involved in autophagosome assembly by regulating trafficking and recycling of phospholipid scramblase ATG9A. The chain is Sorting nexin-7 (SNX7) from Macaca fascicularis (Crab-eating macaque).